A 388-amino-acid polypeptide reads, in one-letter code: Processive diacylglycerol beta-glucosyltransferase (388 aa).

Belongs to the glycosyltransferase 28 family. UgtP subfamily.

The protein localises to the cell membrane. It catalyses the reaction a 1,2-diacyl-3-O-(beta-D-glucopyranosyl)-sn-glycerol + UDP-alpha-D-glucose = a 1,2-diacyl-3-O-(beta-D-Glc-(1-&gt;6)-beta-D-Glc)-sn-glycerol + UDP + H(+). It carries out the reaction a 1,2-diacyl-3-O-(beta-D-Glc-(1-&gt;6)-beta-D-Glc)-sn-glycerol + UDP-alpha-D-glucose = a 1,2-diacyl-3-O-(beta-D-Glc-(1-&gt;6)-beta-D-Glc-(1-&gt;6)-beta-D-Glc)-sn-glycerol + UDP + H(+). The enzyme catalyses a 1,2-diacyl-sn-glycerol + UDP-alpha-D-glucose = a 1,2-diacyl-3-O-(beta-D-glucopyranosyl)-sn-glycerol + UDP + H(+). The protein operates within glycolipid metabolism; diglucosyl-diacylglycerol biosynthesis. Its function is as follows. Processive glucosyltransferase involved in the biosynthesis of both the bilayer- and non-bilayer-forming membrane glucolipids. Is able to successively transfer up to three glucosyl residues to diacylglycerol (DAG), thereby catalyzing the formation of beta-monoglucosyl-DAG (3-O-(beta-D-glucopyranosyl)-1,2-diacyl-sn-glycerol), beta-diglucosyl-DAG (3-O-(beta-D-glucopyranosyl-beta-(1-&gt;6)-D-glucopyranosyl)-1,2-diacyl-sn-glycerol) and beta-triglucosyl-DAG (3-O-(beta-D-glucopyranosyl-beta-(1-&gt;6)-D-glucopyranosyl-beta-(1-&gt;6)-D-glucopyranosyl)-1,2-diacyl-sn-glycerol). Beta-diglucosyl-DAG is the predominant glycolipid found in Bacillales and is also used as a membrane anchor for lipoteichoic acid (LTA). This chain is Processive diacylglycerol beta-glucosyltransferase, found in Bacillus cereus (strain ZK / E33L).